The following is a 491-amino-acid chain: Proline-rich protein PRCC (491 aa).

The tract at residues 1–100 (MSLVAYASSD…PPPPGVSPAE (100 aa)) is mediates interaction with MAD2L2. 3 disordered regions span residues 1-244 (MSLV…SPSA), 260-313 (ITQE…PAFQ), and 432-454 (EEKTMKSFSKKKGEQPTGQQRRK). The span at 10–26 (DESEPDEAEPEPEEEEA) shows a compositional bias: acidic residues. Residues 40–49 (ASLPAPKGPA) show a composition bias toward low complexity. Over residues 50–96 (LLPPPPQMLAPAFPPPLLLPPPTGDPRLQPPPPLPFGLGGFPPPPGV) the composition is skewed to pro residues. Phosphoserine is present on residues S97, S114, S157, S159, S212, and S218. Over residues 111–120 (GLPSPRGPGL) the composition is skewed to low complexity. Over residues 230-244 (APVVGTTTTTPSPSA) the composition is skewed to low complexity. The residue at position 239 (T239) is a Phosphothreonine. Phosphoserine occurs at positions 241 and 267. A compositionally biased stretch (acidic residues) spans 262-272 (QEEDDSDEEVA). Residues 287–307 (GVEPYPYPIPTVPEELPPGTE) are compositionally biased toward pro residues.

Interacts with MAD2L2; the interaction is direct. As to expression, ubiquitous in fetal and adult tissues.

It is found in the nucleus. Its function is as follows. May regulate cell cycle progression through interaction with MAD2L2. In Homo sapiens (Human), this protein is Proline-rich protein PRCC (PRCC).